The primary structure comprises 184 residues: UPF0316 protein YebE (184 aa).

Helical transmembrane passes span 9 to 29 (GIAMVLIILIINIVYVSFFTI), 41 to 61 (LAAGISTIEILVYVTGLSLVL), and 67 to 87 (IQNVIAYALGYGLGVIVGMKI).

Belongs to the UPF0316 family.

It localises to the cell membrane. In Bacillus subtilis (strain 168), this protein is UPF0316 protein YebE (yebE).